A 222-amino-acid chain; its full sequence is Protein-L-isoaspartate O-methyltransferase (222 aa).

S68 is a catalytic residue.

It belongs to the methyltransferase superfamily. L-isoaspartyl/D-aspartyl protein methyltransferase family.

The protein localises to the cytoplasm. The enzyme catalyses [protein]-L-isoaspartate + S-adenosyl-L-methionine = [protein]-L-isoaspartate alpha-methyl ester + S-adenosyl-L-homocysteine. Its function is as follows. Catalyzes the methyl esterification of L-isoaspartyl residues in peptides and proteins that result from spontaneous decomposition of normal L-aspartyl and L-asparaginyl residues. It plays a role in the repair and/or degradation of damaged proteins. This Koribacter versatilis (strain Ellin345) protein is Protein-L-isoaspartate O-methyltransferase.